Consider the following 365-residue polypeptide: Methylthioribose-1-phosphate isomerase (365 aa).

Aspartate 249 (proton donor) is an active-site residue.

This sequence belongs to the eIF-2B alpha/beta/delta subunits family. MtnA subfamily.

It is found in the cytoplasm. The protein localises to the nucleus. The enzyme catalyses 5-(methylsulfanyl)-alpha-D-ribose 1-phosphate = 5-(methylsulfanyl)-D-ribulose 1-phosphate. Its pathway is amino-acid biosynthesis; L-methionine biosynthesis via salvage pathway; L-methionine from S-methyl-5-thio-alpha-D-ribose 1-phosphate: step 1/6. Catalyzes the interconversion of methylthioribose-1-phosphate (MTR-1-P) into methylthioribulose-1-phosphate (MTRu-1-P). The protein is Methylthioribose-1-phosphate isomerase of Ostreococcus lucimarinus (strain CCE9901).